Here is a 457-residue protein sequence, read N- to C-terminus: Glycoprotein endo-alpha-1,2-mannosidase-like protein (457 aa).

Residues 1-8 (MARRRRRA) are Cytoplasmic-facing. A helical; Signal-anchor for type II membrane protein membrane pass occupies residues 9–29 (CIALFLVLLFAFGTLMGLRTL). At 30-457 (KAPDGLPALG…FIKEKEQWLM (428 aa)) the chain is on the lumenal side. Residues 46–93 (PFERRPEGAPAPAARAPAAPAAPPPPPPPPRTADPGGSPGPAPAEAEP) are disordered. Residues 53-64 (GAPAPAARAPAA) show a composition bias toward low complexity. Positions 65–87 (PAAPPPPPPPPRTADPGGSPGPA) are enriched in pro residues.

The protein belongs to the glycosyl hydrolase 99 family.

It localises to the golgi apparatus membrane. This Homo sapiens (Human) protein is Glycoprotein endo-alpha-1,2-mannosidase-like protein (MANEAL).